We begin with the raw amino-acid sequence, 72 residues long: MYLTLQEWNARQRRPRSLETVRRWVRECRIFPPPVKDGREYLFHESAVKVDLNRPVTGGLLKRIRNGKKAKS.

Interacts (via C-terminus) with the integrase (via N-terminus). Part of the excision complex made of the integrase tetramer, IHF, Fis and Xis.

Functionally, part of the excision complex necessary for the excision of prophage from the host genome by site-specific recombination at the att site. The sequence is that of Excisionase (xis) from Escherichia phage lambda (Bacteriophage lambda).